The chain runs to 119 residues: UPF0102 protein CGSHiGG_01960 (119 aa).

Belongs to the UPF0102 family.

In Haemophilus influenzae (strain PittGG), this protein is UPF0102 protein CGSHiGG_01960.